The primary structure comprises 529 residues: Chromosomal replication initiator protein DnaA (529 aa).

The tract at residues 1-72 (MQDFWHAASA…SLACDYWEAT (72 aa)) is domain I, interacts with DnaA modulators. A domain II region spans residues 72–192 (TVDVQFVLDP…HVDDSVHERS (121 aa)). The tract at residues 193–409 (RLNQILTFDN…GALRKILAYS (217 aa)) is domain III, AAA+ region. Positions 237, 239, 240, and 241 each coordinate ATP. A domain IV, binds dsDNA region spans residues 410–529 (NFHGKEITIE…LHVLEQTLKG (120 aa)).

Belongs to the DnaA family. Oligomerizes as a right-handed, spiral filament on DNA at oriC.

Its subcellular location is the cytoplasm. In terms of biological role, plays an essential role in the initiation and regulation of chromosomal replication. ATP-DnaA binds to the origin of replication (oriC) to initiate formation of the DNA replication initiation complex once per cell cycle. Binds the DnaA box (a 9 base pair repeat at the origin) and separates the double-stranded (ds)DNA. Forms a right-handed helical filament on oriC DNA; dsDNA binds to the exterior of the filament while single-stranded (ss)DNA is stabiized in the filament's interior. The ATP-DnaA-oriC complex binds and stabilizes one strand of the AT-rich DNA unwinding element (DUE), permitting loading of DNA polymerase. After initiation quickly degrades to an ADP-DnaA complex that is not apt for DNA replication. Binds acidic phospholipids. This is Chromosomal replication initiator protein DnaA from Ralstonia pickettii (strain 12J).